The sequence spans 271 residues: Dipeptidyl-peptidase 6 (271 aa).

SH3b domains follow at residues 1–64 (MNAI…LFDD) and 72–140 (QKAQ…HPKI). Positions 148-268 (HAFRENVVQT…DLATTITAIG (121 aa)) constitute a NlpC/P60 domain. Cysteine 178 (nucleophile) is an active-site residue. The active-site Proton acceptor is the histidine 224. Histidine 236 is an active-site residue.

Belongs to the peptidase C40 family.

Its subcellular location is the cytoplasm. In terms of biological role, involved in cell sporulation. Hydrolyzes gamma-D-Glu-L-(meso)A2pm linkages only in those peptide units that have a free N-terminal L-alanine. The polypeptide is Dipeptidyl-peptidase 6 (Lysinibacillus sphaericus (Bacillus sphaericus)).